The sequence spans 199 residues: Protein p2 (199 aa).

The protein resides in the host cytoplasm. This chain is Protein p2, found in Avena sativa (Oat).